Consider the following 89-residue polypeptide: Small ribosomal subunit protein uS15 (89 aa).

This sequence belongs to the universal ribosomal protein uS15 family. Part of the 30S ribosomal subunit. Forms a bridge to the 50S subunit in the 70S ribosome, contacting the 23S rRNA.

In terms of biological role, one of the primary rRNA binding proteins, it binds directly to 16S rRNA where it helps nucleate assembly of the platform of the 30S subunit by binding and bridging several RNA helices of the 16S rRNA. Functionally, forms an intersubunit bridge (bridge B4) with the 23S rRNA of the 50S subunit in the ribosome. The sequence is that of Small ribosomal subunit protein uS15 from Roseiflexus castenholzii (strain DSM 13941 / HLO8).